The chain runs to 462 residues: Cleavage and polyadenylation specificity factor subunit 7 (462 aa).

Disordered regions lie at residues 34 to 68 and 161 to 213; these read VLTA…NKTP and TRQN…PSVL. Residues 50 to 62 show a composition bias toward pro residues; sequence EPPPPVRQEPAPK. Residues 82–162 form the RRM domain; it reads AAVYVGSFSW…EKVDVRPATR (81 aa). A compositionally biased stretch (basic and acidic residues) spans 181 to 190; that stretch reads HSRDSSDSAD. A Phosphothreonine modification is found at T194. The residue at position 196 (S196) is a Phosphoserine. A Glycyl lysine isopeptide (Lys-Gly) (interchain with G-Cter in SUMO2) cross-link involves residue K345. The segment at 400 to 462 is disordered; the sequence is SVGASGSSSR…HRDRERDRHH (63 aa). S404 and S414 each carry phosphoserine. The arg/Ser-rich domain stretch occupies residues 409–460; it reads RKRHRSRERSPSRSRESSRRHRDLLHNEDRHDDYFQERNREHERHRDRERDR. Basic and acidic residues-rich tracts occupy residues 416–425 and 432–462; these read ERSPSRSRES and LLHN…DRHH.

The protein belongs to the RRM CPSF6/7 family. As to quaternary structure, component of the cleavage factor Im (CFIm) complex which is a heterotetramer composed of two subunits of NUDT21/CPSF5 and two subunits of CPSF6 or CPSF7 or a heterodimer of CPSF6 and CPSF7. The cleavage factor Im (CFIm) complex associates with the CPSF and CSTF complexes to promote the assembly of the core mRNA 3'-processing machinery. Interacts with NUDT21/CPSF5. Interacts (via Arg/Ser-rich domain) with FIP1L1 (preferentially via unphosphorylated form and Arg/Glu/Asp-rich region); this interaction mediates, at least in part, the interaction between the CFIm and CPSF complexes and may be inhibited by CPSF7 hyper-phosphorylation. In terms of processing, phosphorylated. Asymmetrically dimethylated on arginine residues by PRMT1.

The protein localises to the nucleus. It localises to the cytoplasm. Component of the cleavage factor Im (CFIm) complex that functions as an activator of the pre-mRNA 3'-end cleavage and polyadenylation processing required for the maturation of pre-mRNA into functional mRNAs. CFIm contributes to the recruitment of multiprotein complexes on specific sequences on the pre-mRNA 3'-end, so called cleavage and polyadenylation signals (pA signals). Most pre-mRNAs contain multiple pA signals, resulting in alternative cleavage and polyadenylation (APA) producing mRNAs with variable 3'-end formation. The CFIm complex acts as a key regulator of cleavage and polyadenylation site choice during APA through its binding to 5'-UGUA-3' elements localized in the 3'-untranslated region (UTR) for a huge number of pre-mRNAs. CPSF7 activates directly the mRNA 3'-processing machinery. Binds to pA signals in RNA substrates. In Rattus norvegicus (Rat), this protein is Cleavage and polyadenylation specificity factor subunit 7.